A 369-amino-acid polypeptide reads, in one-letter code: tRNA/tmRNA (uracil-C(5))-methyltransferase (369 aa).

Q193, Y221, N226, E242, and D302 together coordinate S-adenosyl-L-methionine. C327 acts as the Nucleophile in catalysis. The active-site Proton acceptor is the E361.

The protein belongs to the class I-like SAM-binding methyltransferase superfamily. RNA M5U methyltransferase family. TrmA subfamily.

The enzyme catalyses uridine(54) in tRNA + S-adenosyl-L-methionine = 5-methyluridine(54) in tRNA + S-adenosyl-L-homocysteine + H(+). It catalyses the reaction uridine(341) in tmRNA + S-adenosyl-L-methionine = 5-methyluridine(341) in tmRNA + S-adenosyl-L-homocysteine + H(+). Dual-specificity methyltransferase that catalyzes the formation of 5-methyluridine at position 54 (m5U54) in all tRNAs, and that of position 341 (m5U341) in tmRNA (transfer-mRNA). This Actinobacillus succinogenes (strain ATCC 55618 / DSM 22257 / CCUG 43843 / 130Z) protein is tRNA/tmRNA (uracil-C(5))-methyltransferase.